The chain runs to 856 residues: uncharacterized protein (856 aa).

This is an uncharacterized protein from Rickettsia felis (strain ATCC VR-1525 / URRWXCal2) (Rickettsia azadi).